Reading from the N-terminus, the 53-residue chain is UPF0391 membrane protein PSEEN0090 (53 aa).

2 consecutive transmembrane segments (helical) span residues tryptophan 4–alanine 24 and glycine 29–glycine 49.

Belongs to the UPF0391 family.

It localises to the cell membrane. This Pseudomonas entomophila (strain L48) protein is UPF0391 membrane protein PSEEN0090.